The primary structure comprises 267 residues: Phosphate import ATP-binding protein PstB 2 (267 aa).

In terms of domain architecture, ABC transporter spans 21–262 (LATKDLHVYY…AQCQSTNDYV (242 aa)). Residue 53 to 60 (GPSGCGKS) coordinates ATP.

The protein belongs to the ABC transporter superfamily. Phosphate importer (TC 3.A.1.7) family. The complex is composed of two ATP-binding proteins (PstB), two transmembrane proteins (PstC and PstA) and a solute-binding protein (PstS).

The protein localises to the cell membrane. It catalyses the reaction phosphate(out) + ATP + H2O = ADP + 2 phosphate(in) + H(+). Functionally, part of the ABC transporter complex PstSACB involved in phosphate import. Responsible for energy coupling to the transport system. This is Phosphate import ATP-binding protein PstB 2 from Streptococcus pyogenes serotype M18 (strain MGAS8232).